The sequence spans 214 residues: NAD(P)H-quinone oxidoreductase subunit 5, chloroplastic (214 aa).

The next 2 helical transmembrane spans lie at 84–104 (LFPL…GIPF) and 152–172 (SLAI…YSFF).

Belongs to the complex I subunit 5 family. As to quaternary structure, NDH is composed of at least 16 different subunits, 5 of which are encoded in the nucleus.

It is found in the plastid. The protein resides in the chloroplast thylakoid membrane. The catalysed reaction is a plastoquinone + NADH + (n+1) H(+)(in) = a plastoquinol + NAD(+) + n H(+)(out). It catalyses the reaction a plastoquinone + NADPH + (n+1) H(+)(in) = a plastoquinol + NADP(+) + n H(+)(out). In terms of biological role, NDH shuttles electrons from NAD(P)H:plastoquinone, via FMN and iron-sulfur (Fe-S) centers, to quinones in the photosynthetic chain and possibly in a chloroplast respiratory chain. The immediate electron acceptor for the enzyme in this species is believed to be plastoquinone. Couples the redox reaction to proton translocation, and thus conserves the redox energy in a proton gradient. This is NAD(P)H-quinone oxidoreductase subunit 5, chloroplastic (ndhF) from Brachypodium sylvaticum (False brome).